The chain runs to 400 residues: Leucine-rich repeat flightless-interacting protein 2 (400 aa).

Disordered regions lie at residues 1-28 (MGTP…SNID) and 53-119 (LERQ…LSEV). The residue at position 18 (Ser-18) is a Phosphoserine. Residues 29 to 71 (REAEARLAAKRAARAEARDIRMRELERQQKELDEKSDKQYAEN) are a coiled coil. The segment covering 53 to 68 (LERQQKELDEKSDKQY) has biased composition (basic and acidic residues). A compositionally biased stretch (polar residues) spans 73 to 102 (TRPSSRNSASATTPLSGNSSRRVSGDTSSL). Phosphoserine is present on residues Ser-77, Ser-80, Ser-88, Ser-92, and Ser-96. A Phosphothreonine modification is found at Thr-99. Phosphoserine is present on residues Ser-100 and Ser-101. Coiled-coil stretches lie at residues 106 to 202 (DTSL…LIEK) and 245 to 393 (LDVR…KANR).

The protein belongs to the LRRFIP family. In terms of assembly, interacts with DVL3 and FLII. Weakly interacts with MYD88 in resting cells. Following LPS-stimulation, the interaction with MYD88 is rapidly enhanced; the complex gradually dissociates to basal levels after 6 hours of stimulation. Interaction with MYD88 is regulated by LPS-induced phosphorylation. In the presence of LPS, competes with FLII for MYD88-binding.

Functionally, may function as activator of the canonical Wnt signaling pathway, in association with DVL3, upstream of CTNNB1/beta-catenin. Positively regulates Toll-like receptor (TLR) signaling in response to agonist probably by competing with the negative FLII regulator for MYD88-binding. The polypeptide is Leucine-rich repeat flightless-interacting protein 2 (LRRFIP2) (Bos taurus (Bovine)).